The following is a 137-amino-acid chain: uncharacterized protein (137 aa).

This is an uncharacterized protein from Homo sapiens (Human).